We begin with the raw amino-acid sequence, 202 residues long: MGCRQSRHSRGKRAEKVEETQTELLEALDKEGRILEGRHEEAGQVPQTSNAQEKVSLSDCIQEAKASLQNTCASHVSPQEATQAKMNKVDGSILSRLYRNHIQDYGSPGPFWEQELESLHHVIEMKNERIHELEKQLFLLEMLKEKNLILALKNTTLRQEVEDLQFQAGNRLTMSRQLRKDLLQDLEKESQNGHCCSRRRSH.

Residues M1–G11 are compositionally biased toward basic residues. Disordered regions lie at residues M1–T20 and G32–Q52. G2 is lipidated: N-myristoyl glycine. Positions G32–A42 are enriched in basic and acidic residues. Phosphoserine is present on S92. A coiled-coil region spans residues W112 to K146.

It belongs to the CCDC69 family.

It localises to the cytoplasm. The protein resides in the cytoskeleton. Its subcellular location is the spindle. It is found in the midbody. In terms of biological role, may act as a scaffold to regulate the recruitment and assembly of spindle midzone components. Required for the localization of AURKB and PLK1 to the spindle midzone. In Mus musculus (Mouse), this protein is Coiled-coil domain-containing protein 69 (Ccdc69).